A 602-amino-acid chain; its full sequence is Baseplate wedge protein gp10 (602 aa).

Positions 501–512 (LNNNDLDSGGNP) are enriched in polar residues. The segment at 501–523 (LNNNDLDSGGNPSHTAGGTGGST) is disordered.

This sequence belongs to the T4likevirus baseplate wedge protein gp10 family. As to quaternary structure, homotrimer; disulfide-linked. Heteromultimer with gp7; a gp10 molecule is disulfide-linked to gp7 and the other two remaining gp10 molecules form a disulfide bond. The gp10 trimer interacts with gp11 trimer and with the short tail fiber (STF) composed of the gp12 trimer. Part of the baseplate macromolecular complex which consists of gp5, gp5.4, gp27 (central spike complex); gp6, gp25, gp53 (inner baseplate); gp7, gp8 (intermediate baseplate); gp9, gp10, gp11, gp12 (peripheral); gp48 and gp54 (proximal region of the tail tube).

It localises to the virion. Peripheral baseplate protein that is part of the tail fiber network. Connects the short tail fibers to the baseplate. During infection, the baseplate undergoes a conformational change from a dome-shaped to a star-shaped structure. At this point, gp10 rotates and acts as a lever that unfolds the short tail fibers, which then interact with host cell surface receptors. Involved in the tail assembly. The chain is Baseplate wedge protein gp10 (10) from Escherichia coli (Bacteriophage T4).